Here is a 211-residue protein sequence, read N- to C-terminus: uncharacterized protein (211 aa).

The next 3 membrane-spanning stretches (helical) occupy residues 22–42, 111–131, and 133–153; these read FINF…GLKV, IIGA…WFPV, and GMAG…FMIT.

To E.coli YkgB. It to H.influenzae HI_0219.

The protein resides in the cell membrane. This is an uncharacterized protein from Mannheimia haemolytica (Pasteurella haemolytica).